The primary structure comprises 206 residues: Flavin reductase (NADPH) (206 aa).

Residues glycine 10, threonine 12, glycine 13, glutamine 14, threonine 15, arginine 35, serine 38, and arginine 39 each contribute to the NADP(+) site. The residue at position 42 (serine 42) is a Phosphoserine. Positions 54, 55, 75, 76, and 78 each coordinate NADP(+). At serine 82 the chain carries Phosphoserine. The NADP(+) site is built by methionine 87, cysteine 109, histidine 132, histidine 153, and isoleucine 154. Catalysis depends on cysteine 109, which acts as the S-nitroso-cysteine intermediate; for S-nitroso-CoA-dependent nitrosyltransferase activity. Cysteine 188 functions as the S-nitroso-cysteine intermediate; for S-nitroso-CoA-dependent nitrosyltransferase activity in the catalytic mechanism.

This sequence belongs to the BLVRB family. As to quaternary structure, monomer. In terms of tissue distribution, predominantly expressed in liver and erythrocytes. At lower levels in heart, lung, adrenal gland and cerebrum. Expressed in adult red blood cells.

Its subcellular location is the cytoplasm. The catalysed reaction is reduced riboflavin + NADP(+) = riboflavin + NADPH + 2 H(+). The enzyme catalyses bilirubin IXbeta + NADP(+) = biliverdin IXbeta + NADPH + H(+). It catalyses the reaction FMNH2 + NAD(+) = FMN + NADH + 2 H(+). It carries out the reaction FMNH2 + NADP(+) = FMN + NADPH + 2 H(+). The catalysed reaction is S-nitroso-CoA + L-cysteinyl-[protein] = S-nitroso-L-cysteinyl-[protein] + CoA. The enzyme catalyses L-cysteinyl-[SCAN] + S-nitroso-CoA = S-nitroso-L-cysteinyl-[SCAN] + CoA. It catalyses the reaction S-nitroso-L-cysteinyl-[SCAN] + L-cysteinyl-[protein] = L-cysteinyl-[SCAN] + S-nitroso-L-cysteinyl-[protein]. Its activity is regulated as follows. Mesobiliverdin acts as a competitive inhibitor for flavin reduction, indicating that flavin and tetrapyrrole substrates compete for the same site. Inhibited by a wide range of xanthene-based drugs, such as phloxine B, erythrosin B, tamibarotene, sulfasalazine, olsalazine, febuxostat, ataluren (PTC124) and deferasirox. Its function is as follows. Enzyme that can both act as a NAD(P)H-dependent reductase and a S-nitroso-CoA-dependent nitrosyltransferase. Promotes fetal heme degradation during development. Also expressed in adult tissues, where it acts as a regulator of hematopoiesis, intermediary metabolism (glutaminolysis, glycolysis, TCA cycle and pentose phosphate pathway) and insulin signaling. Has a broad specificity oxidoreductase activity by catalyzing the NAD(P)H-dependent reduction of a variety of flavins, such as riboflavin, FAD or FMN, biliverdins, methemoglobin and PQQ (pyrroloquinoline quinone). Contributes to fetal heme catabolism by catalyzing reduction of biliverdin IXbeta into bilirubin IXbeta in the liver. Biliverdin IXbeta, which constitutes the major heme catabolite in the fetus is not present in adult. Does not reduce bilirubin IXalpha. Can also reduce the complexed Fe(3+) iron to Fe(2+) in the presence of FMN and NADPH. Acts as a protein nitrosyltransferase by catalyzing nitrosylation of cysteine residues of target proteins, such as HMOX2, INSR and IRS1. S-nitroso-CoA-dependent nitrosyltransferase activity is mediated via a 'ping-pong' mechanism: BLVRB first associates with both S-nitroso-CoA and protein substrate, nitric oxide group is then transferred from S-nitroso-CoA to Cys-109 and Cys-188 residues of BLVRB and from S-nitroso-BLVRB to the protein substrate. Inhibits insulin signaling by mediating nitrosylation of INSR and IRS1, leading to their inhibition. This is Flavin reductase (NADPH) from Homo sapiens (Human).